The primary structure comprises 194 residues: Peptidyl-tRNA hydrolase (194 aa).

Residue Y17 participates in tRNA binding. H22 (proton acceptor) is an active-site residue. The tRNA site is built by F68, N70, and N116.

This sequence belongs to the PTH family. Monomer.

It is found in the cytoplasm. It catalyses the reaction an N-acyl-L-alpha-aminoacyl-tRNA + H2O = an N-acyl-L-amino acid + a tRNA + H(+). Hydrolyzes ribosome-free peptidyl-tRNAs (with 1 or more amino acids incorporated), which drop off the ribosome during protein synthesis, or as a result of ribosome stalling. Functionally, catalyzes the release of premature peptidyl moieties from peptidyl-tRNA molecules trapped in stalled 50S ribosomal subunits, and thus maintains levels of free tRNAs and 50S ribosomes. The sequence is that of Peptidyl-tRNA hydrolase from Actinobacillus pleuropneumoniae serotype 5b (strain L20).